The primary structure comprises 719 residues: NF-kappa-B inhibitor zeta (719 aa).

A compositionally biased stretch (low complexity) spans 46–81 (GACDGGCSASGPSAPGSPGSDSSDFSSASSVSSCGA). Residues 46–97 (GACDGGCSASGPSAPGSPGSDSSDFSSASSVSSCGAVESRPRGGARAERLQV) form a disordered region. Residues 84–97 (SRPRGGARAERLQV) are compositionally biased toward basic and acidic residues. Residues 108 to 130 (RGPFQGVRVKNSVKELLLHIRSH) enclose the OCA domain. The short motif at 164–179 (KRKGSDSLSDGPACKR) is the Nuclear localization signal element. Disordered stretches follow at residues 188-210 (LTPP…ESKQ) and 289-343 (YSPQ…FAPL). The segment covering 201-210 (EDVHHNESKQ) has biased composition (basic and acidic residues). The tract at residues 322 to 394 (SYEPHLFGRE…LARPDASSTP (73 aa)) is required for transcriptional activity. The segment at 405 to 719 (GGNPMSTTQL…KSIQQRAPPY (315 aa)) is interaction with NFKB1/p50. 7 ANK repeats span residues 444–473 (DGDT…ALHM), 480–509 (NGQS…QVNT), 513–542 (WGRT…GSNQ), 552–581 (DGLT…HSPE), 583–608 (QELL…AVEA), 613–642 (SGRT…CLSF), and 649–682 (NGNT…DPST).

As to quaternary structure, interacts with NFKB1/p50. Interacts with RELA. Interacts with AKIRIN2.

The protein localises to the nucleus. Its function is as follows. Involved in regulation of NF-kappa-B transcription factor complexes. Inhibits NF-kappa-B activity without affecting its nuclear translocation upon stimulation. Inhibits DNA-binding of RELA and NFKB1/p50, and of the NF-kappa-B p65-p50 heterodimer and the NF-kappa-B p50-p50 homodimer. Also seems to activate NF-kappa-B-mediated transcription. In vitro, upon association with NFKB1/p50 has transcriptional activation activity and, together with NFKB1/p50 and RELA, is recruited to LCN2 promoters. Promotes transcription of LCN2 and DEFB4. Is recruited to IL-6 promoters and activates IL-6 but decreases TNF-alpha production in response to LPS. Seems to be involved in the induction of inflammatory genes activated through TLR/IL-1 receptor signaling. Involved in the induction of T helper 17 cells (Th17) differentiation upon recognition of antigen by T cell antigen receptor (TCR). The sequence is that of NF-kappa-B inhibitor zeta (NFKBIZ) from Bos taurus (Bovine).